Consider the following 143-residue polypeptide: MGKCRGLRTARKLRSHRRDQKWHDKQYKKAHLGTALKANPFGGASHAKGIVLEKVGVEAKQPNSAIRKCVRVQLIKNGKKITAFVPNDGCLNFIEENDEVLVAGFGRKGHAVGDIPGVRFKVVKVANVSLLALYKGKKERPRS.

A compositionally biased stretch (basic residues) spans 1–20; sequence MGKCRGLRTARKLRSHRRDQ. Residues 1–26 are disordered; it reads MGKCRGLRTARKLRSHRRDQKWHDKQ. Residue K37 forms a Glycyl lysine isopeptide (Lys-Gly) (interchain with G-Cter in SUMO2) linkage. K54 is subject to N6-succinyllysine. P62 is modified (3-hydroxyproline). K135 carries the N6-acetyllysine modification.

This sequence belongs to the universal ribosomal protein uS12 family. As to quaternary structure, component of the 40S small ribosomal subunit. Part of the small subunit (SSU) processome, composed of more than 70 proteins and the RNA chaperone small nucleolar RNA (snoRNA) U3. Hydroxylation at Pro-62 affects translation termination efficiency.

The protein resides in the cytoplasm. It is found in the cytosol. The protein localises to the rough endoplasmic reticulum. Its subcellular location is the nucleus. It localises to the nucleolus. Functionally, component of the ribosome, a large ribonucleoprotein complex responsible for the synthesis of proteins in the cell. The small ribosomal subunit (SSU) binds messenger RNAs (mRNAs) and translates the encoded message by selecting cognate aminoacyl-transfer RNA (tRNA) molecules. The large subunit (LSU) contains the ribosomal catalytic site termed the peptidyl transferase center (PTC), which catalyzes the formation of peptide bonds, thereby polymerizing the amino acids delivered by tRNAs into a polypeptide chain. The nascent polypeptides leave the ribosome through a tunnel in the LSU and interact with protein factors that function in enzymatic processing, targeting, and the membrane insertion of nascent chains at the exit of the ribosomal tunnel. Plays an important role in translational accuracy. Part of the small subunit (SSU) processome, first precursor of the small eukaryotic ribosomal subunit. During the assembly of the SSU processome in the nucleolus, many ribosome biogenesis factors, an RNA chaperone and ribosomal proteins associate with the nascent pre-rRNA and work in concert to generate RNA folding, modifications, rearrangements and cleavage as well as targeted degradation of pre-ribosomal RNA by the RNA exosome. This is Small ribosomal subunit protein uS12 (RPS23) from Bos taurus (Bovine).